Consider the following 267-residue polypeptide: 2-keto-3-deoxy-L-rhamnonate aldolase (267 aa).

Catalysis depends on histidine 49, which acts as the Proton acceptor. A substrate-binding site is contributed by glutamine 151. Glutamate 153 lines the Mg(2+) pocket. Positions 178 and 179 each coordinate substrate. Mg(2+) is bound at residue aspartate 179.

It belongs to the HpcH/HpaI aldolase family. KDR aldolase subfamily. Homohexamer. The cofactor is Mg(2+).

The catalysed reaction is 2-dehydro-3-deoxy-L-rhamnonate = (S)-lactaldehyde + pyruvate. Catalyzes the reversible retro-aldol cleavage of 2-keto-3-deoxy-L-rhamnonate (KDR) to pyruvate and lactaldehyde. The chain is 2-keto-3-deoxy-L-rhamnonate aldolase from Escherichia coli (strain UTI89 / UPEC).